Reading from the N-terminus, the 45-residue chain is Mu-conotoxin-like Cal 12.1.2g (45 aa).

4 disulfides stabilise this stretch: Cys3–Cys16, Cys11–Cys28, Cys18–Cys33, and Cys27–Cys39. 4-hydroxyproline is present on Pro23. 6'-bromotryptophan occurs at positions 37 and 38. The residue at position 40 (Pro40) is a 4-hydroxyproline.

In terms of tissue distribution, expressed by the venom duct.

Its subcellular location is the secreted. In terms of biological role, mu-conotoxins block voltage-gated sodium channels. This toxin reversibly blocks voltage-gated sodium channel in cephalopods, with no alteration in the voltage dependence of sodium conductance or on the kinetics of inactivation. This Californiconus californicus (California cone) protein is Mu-conotoxin-like Cal 12.1.2g.